Consider the following 113-residue polypeptide: Large ribosomal subunit protein uL22 (113 aa).

This sequence belongs to the universal ribosomal protein uL22 family. As to quaternary structure, part of the 50S ribosomal subunit.

This protein binds specifically to 23S rRNA; its binding is stimulated by other ribosomal proteins, e.g. L4, L17, and L20. It is important during the early stages of 50S assembly. It makes multiple contacts with different domains of the 23S rRNA in the assembled 50S subunit and ribosome. Its function is as follows. The globular domain of the protein is located near the polypeptide exit tunnel on the outside of the subunit, while an extended beta-hairpin is found that lines the wall of the exit tunnel in the center of the 70S ribosome. This chain is Large ribosomal subunit protein uL22, found in Stenotrophomonas maltophilia (strain K279a).